Reading from the N-terminus, the 118-residue chain is NADH-quinone oxidoreductase subunit A 2 (118 aa).

Transmembrane regions (helical) follow at residues tyrosine 5–phenylalanine 25, phenylalanine 60–tryptophan 80, and leucine 87–isoleucine 107.

Belongs to the complex I subunit 3 family. NDH-1 is composed of 14 different subunits. Subunits NuoA, H, J, K, L, M, N constitute the membrane sector of the complex.

The protein localises to the cell inner membrane. The enzyme catalyses a quinone + NADH + 5 H(+)(in) = a quinol + NAD(+) + 4 H(+)(out). In terms of biological role, NDH-1 shuttles electrons from NADH, via FMN and iron-sulfur (Fe-S) centers, to quinones in the respiratory chain. The immediate electron acceptor for the enzyme in this species is believed to be ubiquinone. Couples the redox reaction to proton translocation (for every two electrons transferred, four hydrogen ions are translocated across the cytoplasmic membrane), and thus conserves the redox energy in a proton gradient. This chain is NADH-quinone oxidoreductase subunit A 2, found in Geobacter metallireducens (strain ATCC 53774 / DSM 7210 / GS-15).